A 630-amino-acid polypeptide reads, in one-letter code: MTTTVEQTAESHVFEADVARLLHMMVHSVYSDKGVFLRELISNGADACEKLRYEAIETPSLLAADAESRIMLRLDEESRQLVVEDNGIGMRRDEMIEALGTIARSGTRAFMERIAENKAAEGAQFIGQFGVGFYSCFMVAEHVDVISRRAGSEEAWKWSSDGKGSYSVEAANLVEAPARGTRIVLHLMEDAKTYTSRWTVERIVKEQSGHVPVAIRIVDKPGGEPVQITDGTALWTKSKSEVSKEDYTDFYRGLSGQYDEPALTVHFRAEGRHEYTALAFVPGTQPFDMFDPERKGRMKLYVKRVFITDDAELMPRYLRFVRGLIDTADLPLNVSREMIQESPILAAIRKGVTNRVITAIEKLADGESETYLTFWKNFGPVLKEGIYEDYERRAQLMALARFHTSASPEGHRSLAEYVKDAKEGQDAIYYLAGGSLDQLKASPQLEGFRARGIEVLLLTDSVDSFWVVNAPEFEGKAFKSITQGTADLAQFPRLDNQTPPEQDSAGLATFIGFAREKLAGQVADVRASDRLTESAVCLVAPEDGYDRQMEKILQNAGRLQGATKPILEINLAHPVIKAIAAVEDDASYQEDATFLLLDQARILDGERPQDPRKFAQRLARVFERSVRSEG.

An a; substrate-binding region spans residues M1–R336. The segment at E337–K551 is b. The tract at residues I552–G630 is c.

The protein belongs to the heat shock protein 90 family. In terms of assembly, homodimer.

Its subcellular location is the cytoplasm. In terms of biological role, molecular chaperone. Has ATPase activity. The sequence is that of Chaperone protein HtpG from Rhizobium etli (strain ATCC 51251 / DSM 11541 / JCM 21823 / NBRC 15573 / CFN 42).